The chain runs to 127 residues: Thioredoxin (127 aa).

The region spanning 2–115 (SDGVKHINSA…LRAAAEKMGR (114 aa)) is the Thioredoxin domain. Residues cysteine 33 and cysteine 36 each act as nucleophile in the active site. Cysteine 33 and cysteine 36 are oxidised to a cystine.

Belongs to the thioredoxin family.

Its function is as follows. Participates in various redox reactions through the reversible oxidation of its active center dithiol to a disulfide and catalyzes dithiol-disulfide exchange reactions. The protein is Thioredoxin (trx) of Neurospora crassa (strain ATCC 24698 / 74-OR23-1A / CBS 708.71 / DSM 1257 / FGSC 987).